We begin with the raw amino-acid sequence, 366 residues long: Geranylgeranyl pyrophosphate synthase, chloroplastic/chromoplastic (366 aa).

Positions 44-65 are disordered; sequence KRTVSSSSSSSLITKEDNNLKS. Positions 112, 115, and 144 each coordinate isopentenyl diphosphate. Residues D151 and D157 each coordinate Mg(2+). R162 provides a ligand contact to dimethylallyl diphosphate. R163 contacts isopentenyl diphosphate. Dimethylallyl diphosphate contacts are provided by K251, T252, Q289, K306, and K316.

It belongs to the FPP/GGPP synthase family. In terms of assembly, dimer. Mg(2+) serves as cofactor.

The protein resides in the plastid. Its subcellular location is the chloroplast stroma. It is found in the chromoplast. The catalysed reaction is isopentenyl diphosphate + dimethylallyl diphosphate = (2E)-geranyl diphosphate + diphosphate. It carries out the reaction isopentenyl diphosphate + (2E)-geranyl diphosphate = (2E,6E)-farnesyl diphosphate + diphosphate. The enzyme catalyses isopentenyl diphosphate + (2E,6E)-farnesyl diphosphate = (2E,6E,10E)-geranylgeranyl diphosphate + diphosphate. The protein operates within isoprenoid biosynthesis; farnesyl diphosphate biosynthesis; farnesyl diphosphate from geranyl diphosphate and isopentenyl diphosphate: step 1/1. Its pathway is isoprenoid biosynthesis; geranyl diphosphate biosynthesis; geranyl diphosphate from dimethylallyl diphosphate and isopentenyl diphosphate: step 1/1. It functions in the pathway isoprenoid biosynthesis; geranylgeranyl diphosphate biosynthesis; geranylgeranyl diphosphate from farnesyl diphosphate and isopentenyl diphosphate: step 1/1. Functionally, catalyzes the trans-addition of the three molecules of IPP onto DMAPP to form geranylgeranyl pyrophosphate. The protein is Geranylgeranyl pyrophosphate synthase, chloroplastic/chromoplastic (GGPS1) of Sinapis alba (White mustard).